The primary structure comprises 1018 residues: DNA polymerase gamma (1018 aa).

Belongs to the DNA polymerase type-A family. It depends on Mg(2+) as a cofactor.

It is found in the mitochondrion. It catalyses the reaction DNA(n) + a 2'-deoxyribonucleoside 5'-triphosphate = DNA(n+1) + diphosphate. Involved in the replication of mitochondrial DNA. This chain is DNA polymerase gamma (mip1), found in Schizosaccharomyces pombe (strain 972 / ATCC 24843) (Fission yeast).